The primary structure comprises 137 residues: Flagellar basal body rod protein FlgB (137 aa).

Belongs to the flagella basal body rod proteins family. As to quaternary structure, the basal body constitutes a major portion of the flagellar organelle and consists of a number of rings mounted on a central rod. In Gram-negative bacteria, at least four rings, L, P, S and M are present, whereas Gram-positive bacteria lack the L and P rings. The rod consists of about 26 subunits of FlgG in the distal portion, and FlgB, FlgC and FlgF build up the proximal portion of the rod with about 6 subunits each. Rod assembly occurs by export via the flagellum-specific pathway of its constituent proteins and by their incorporation into the rod structure in the probable order of FlgB, FlgC, FlgF and FlgG. Another protein, FliE, also assembles onto the stable rod structure.

Its subcellular location is the bacterial flagellum basal body. Its function is as follows. Structural component of flagellum, the bacterial motility apparatus. Part of the rod structure of flagellar basal body. This Yersinia ruckeri protein is Flagellar basal body rod protein FlgB.